We begin with the raw amino-acid sequence, 744 residues long: Dolasta-1(15),8-diene synthase (744 aa).

A terpene cyclase region spans residues 1 to 344 (MASTMMNYQD…RRYNPAAPLP (344 aa)). Residues aspartate 108 and aspartate 112 each coordinate Mg(2+). Substrate contacts are provided by residues aspartate 108, aspartate 112, 198-201 (RHYD), 246-250 (SWDKE), and 336-337 (RY). A DDXXD motif is present at residues 108 to 112 (DDLTD). The tract at residues 345 to 744 (RREDIGKVNG…LHLITFQLKV (400 aa)) is prenyltransferase. The tract at residues 399–422 (YTTMTPAETSSDDKKKKAKASHET) is disordered. Basic and acidic residues predominate over residues 409–422 (SDDKKKKAKASHET). Positions 459 and 488 each coordinate isopentenyl diphosphate. Mg(2+) is bound by residues aspartate 495 and aspartate 499. The DDXXD motif lies at 495 to 499 (DDVQD). Arginine 504 is a binding site for dimethylallyl diphosphate. Isopentenyl diphosphate is bound at residue arginine 505. Dimethylallyl diphosphate contacts are provided by lysine 581, threonine 582, and glutamine 617.

The protein in the N-terminal section; belongs to the terpene synthase family. It in the C-terminal section; belongs to the FPP/GGPP synthase family. In terms of assembly, hexamer. Requires Mg(2+) as cofactor.

The enzyme catalyses isopentenyl diphosphate + (2E,6E)-farnesyl diphosphate = (2E,6E,10E)-geranylgeranyl diphosphate + diphosphate. It carries out the reaction (2E,6E,10E)-geranylgeranyl diphosphate = (5R,12R,14S)-dolasta-1(15),8-diene + diphosphate. The catalysed reaction is (2E,6E,10E)-geranylgeranyl diphosphate = delta-araneosene + diphosphate. Functionally, bifunctional terpene synthase involved in the biosynthesis of the diterpenes delta-araneosene and dolasta-1(15),8-diene. The C-terminal prenyltransferase domain of CgDS catalyzes formation of the universal precursor of diterpene, geranylgeranyl diphosphate (GGPP), whereas the N-terminal terpene cyclase domain catalyzes the cyclization of GGPP to the intermediate delta-araneosene that is further converted to dolasta-1(15),8-diene in a second cyclization event. In some cases the cyclization stops at the delta-araneosene stage. The polypeptide is Dolasta-1(15),8-diene synthase (Colletotrichum gloeosporioides (Anthracnose fungus)).